The following is a 626-amino-acid chain: Solute carrier family 13 member 4 (626 aa).

4 helical membrane passes run 13–33, 52–72, 77–97, and 113–133; these read LLLVVCVPLLLLPLPVLHPSS, AVPLGAAALVPAFLYPFFGVL, VAAEYFKNTTLLLVGVICVAA, and VLMAGAKPGMLLLCFMCCTTL. A compositionally biased stretch (polar residues) spans 217 to 228; the sequence is SITNPIKTANQH. Positions 217–252 are disordered; that stretch reads SITNPIKTANQHQGKKQHPSQEKPQVLTPSPRKQKL. The next 8 membrane-spanning stretches (helical) occupy residues 274-294, 309-329, 372-392, 414-434, 466-486, 499-519, 543-563, and 590-610; these read YSATIGGLTTIIGTSTSLIFL, FGTWFLFSFPISLIMLVVSWF, ISYPEMVTGFFFILMTVLWFT, ATVSVFLGFLLFLIPAKKPCF, IVILVGGGYALASGSKSSGLS, LPPWAVTLLACILVSIVTEFV, PLYTLIPVTMCISFAVMLPVG, and VIGLVIVMVAINTWGVSLFHL.

This sequence belongs to the SLC13A/DASS transporter (TC 2.A.47) family. NADC subfamily. Highly expressed in placenta and testis with intermediate levels in brain and lower levels in heart, thymus and liver.

Its subcellular location is the membrane. It catalyses the reaction sulfate(out) + 3 Na(+)(out) = sulfate(in) + 3 Na(+)(in). Its activity is regulated as follows. Transport is inhibited by thiosulfate, phosphate, molybdate, selenate and tungstate. Not inhibited by oxalate, citrate, succinate, phenol red or 4,4'-diisothiocyanostilbene-2,2'-disulfonic acid (DIDS). In terms of biological role, sodium:sulfate symporter that mediates sulfate reabsorption in the high endothelial venules (HEV). The chain is Solute carrier family 13 member 4 (SLC13A4) from Homo sapiens (Human).